A 397-amino-acid polypeptide reads, in one-letter code: L-asparaginase-like protein GM15681 (397 aa).

Residues 1–22 (MLAQSCCLRLLILLLLFTSICS) form the signal peptide. Intrachain disulfides connect Cys-90-Cys-95, Cys-189-Cys-205, and Cys-344-Cys-371.

This sequence belongs to the Ntn-hydrolase family.

This is L-asparaginase-like protein GM15681 from Drosophila sechellia (Fruit fly).